We begin with the raw amino-acid sequence, 458 residues long: UDP-N-acetylmuramoylalanine--D-glutamate ligase (458 aa).

Residue 124 to 130 (GSDGKTT) coordinates ATP.

This sequence belongs to the MurCDEF family.

It localises to the cytoplasm. It catalyses the reaction UDP-N-acetyl-alpha-D-muramoyl-L-alanine + D-glutamate + ATP = UDP-N-acetyl-alpha-D-muramoyl-L-alanyl-D-glutamate + ADP + phosphate + H(+). Its pathway is cell wall biogenesis; peptidoglycan biosynthesis. Functionally, cell wall formation. Catalyzes the addition of glutamate to the nucleotide precursor UDP-N-acetylmuramoyl-L-alanine (UMA). This chain is UDP-N-acetylmuramoylalanine--D-glutamate ligase, found in Clostridium botulinum (strain Alaska E43 / Type E3).